The following is a 311-amino-acid chain: 4-diphosphocytidyl-2-C-methyl-D-erythritol kinase (311 aa).

K9 is an active-site residue. 95–105 lines the ATP pocket; it reads PLGAGLAGGST. Residue D137 is part of the active site.

Belongs to the GHMP kinase family. IspE subfamily.

The catalysed reaction is 4-CDP-2-C-methyl-D-erythritol + ATP = 4-CDP-2-C-methyl-D-erythritol 2-phosphate + ADP + H(+). The protein operates within isoprenoid biosynthesis; isopentenyl diphosphate biosynthesis via DXP pathway; isopentenyl diphosphate from 1-deoxy-D-xylulose 5-phosphate: step 3/6. Its function is as follows. Catalyzes the phosphorylation of the position 2 hydroxy group of 4-diphosphocytidyl-2C-methyl-D-erythritol. This chain is 4-diphosphocytidyl-2-C-methyl-D-erythritol kinase, found in Thermosynechococcus vestitus (strain NIES-2133 / IAM M-273 / BP-1).